A 527-amino-acid chain; its full sequence is Peptide chain release factor 3 (527 aa).

The tr-type G domain occupies 11–278 (AKRRTFAIIS…GFVEWAPAPL (268 aa)). GTP contacts are provided by residues 20–27 (SHPDAGKT), 87–91 (DTPGH), and 141–144 (NKMD).

Belongs to the TRAFAC class translation factor GTPase superfamily. Classic translation factor GTPase family. PrfC subfamily.

It localises to the cytoplasm. Increases the formation of ribosomal termination complexes and stimulates activities of RF-1 and RF-2. It binds guanine nucleotides and has strong preference for UGA stop codons. It may interact directly with the ribosome. The stimulation of RF-1 and RF-2 is significantly reduced by GTP and GDP, but not by GMP. The protein is Peptide chain release factor 3 of Teredinibacter turnerae (strain ATCC 39867 / T7901).